The chain runs to 274 residues: 2,3,4,5-tetrahydropyridine-2,6-dicarboxylate N-succinyltransferase (274 aa).

2 residues coordinate substrate: arginine 104 and aspartate 141.

The protein belongs to the transferase hexapeptide repeat family. In terms of assembly, homotrimer.

It localises to the cytoplasm. The enzyme catalyses (S)-2,3,4,5-tetrahydrodipicolinate + succinyl-CoA + H2O = (S)-2-succinylamino-6-oxoheptanedioate + CoA. Its pathway is amino-acid biosynthesis; L-lysine biosynthesis via DAP pathway; LL-2,6-diaminopimelate from (S)-tetrahydrodipicolinate (succinylase route): step 1/3. The polypeptide is 2,3,4,5-tetrahydropyridine-2,6-dicarboxylate N-succinyltransferase (Salmonella typhi).